The chain runs to 320 residues: dTDP-glucose 4,6-dehydratase (320 aa).

NAD(+) is bound by residues 11 to 12, 38 to 41, 64 to 65, 84 to 88, and serine 103; these read FI, DKLG, DI, and FAAET. Threonine 88 provides a ligand contact to substrate. Residue threonine 128 coordinates substrate. Residue aspartate 129 is the Proton donor of the active site. Active-site proton acceptor residues include glutamate 130 and tyrosine 152. 152 to 156 serves as a coordination point for NAD(+); the sequence is YAASK. Residue asparagine 181 coordinates substrate. Residue asparagine 182 coordinates NAD(+). Substrate contacts are provided by residues 191–192, 207–209, arginine 216, asparagine 251, and 274–278; these read KM, PVY, and DRKGH.

The protein belongs to the NAD(P)-dependent epimerase/dehydratase family. dTDP-glucose dehydratase subfamily. As to quaternary structure, homodimer. NAD(+) is required as a cofactor.

The enzyme catalyses dTDP-alpha-D-glucose = dTDP-4-dehydro-6-deoxy-alpha-D-glucose + H2O. Its function is as follows. Probably involved in the biosynthesis of the acarviose moiety of the alpha-glucosidase inhibitor acarbose. Catalyzes the dehydration of dTDP-D-glucose to form dTDP-6-deoxy-D-xylo-4-hexulose via a three-step process involving oxidation, dehydration and reduction. The sequence is that of dTDP-glucose 4,6-dehydratase from Actinoplanes sp. (strain ATCC 31044 / CBS 674.73 / SE50/110).